Reading from the N-terminus, the 576-residue chain is Arginine--tRNA ligase (576 aa).

Residues 122 to 132 (PNVAKEMHVGH) carry the 'HIGH' region motif.

It belongs to the class-I aminoacyl-tRNA synthetase family. Monomer.

The protein localises to the cytoplasm. It catalyses the reaction tRNA(Arg) + L-arginine + ATP = L-arginyl-tRNA(Arg) + AMP + diphosphate. This is Arginine--tRNA ligase from Sodalis glossinidius (strain morsitans).